A 133-amino-acid chain; its full sequence is Large-conductance mechanosensitive channel (133 aa).

The next 2 helical transmembrane spans lie at Phe10–Gly30 and Gly76–Ile96.

It belongs to the MscL family. As to quaternary structure, homopentamer.

It is found in the cell inner membrane. Channel that opens in response to stretch forces in the membrane lipid bilayer. May participate in the regulation of osmotic pressure changes within the cell. In Campylobacter curvus (strain 525.92), this protein is Large-conductance mechanosensitive channel.